Here is a 67-residue protein sequence, read N- to C-terminus: Large ribosomal subunit protein bL35 (67 aa).

Belongs to the bacterial ribosomal protein bL35 family.

In Methylorubrum populi (strain ATCC BAA-705 / NCIMB 13946 / BJ001) (Methylobacterium populi), this protein is Large ribosomal subunit protein bL35.